A 782-amino-acid chain; its full sequence is uncharacterized protein (782 aa).

A helical membrane pass occupies residues 10–30 (LLTITIGAVAVSSILLGGIFY). The segment covering 57–76 (LDYQKARPSIKDSNLKEIPK) has biased composition (basic and acidic residues). The segment at 57-171 (LDYQKARPSI…PQPQQVPNNS (115 aa)) is disordered. The span at 77–97 (PKPQPKPKPQPTPFPDPIPTP) shows a compositional bias: pro residues. Basic and acidic residues predominate over residues 98-124 (PKKEELKKPDIKPEEPKKPEIKPEPKP). Residues 125-135 (EPIPQPAPPIE) show a composition bias toward pro residues.

To U.parvum UU046.

It is found in the membrane. This is an uncharacterized protein from Ureaplasma parvum serovar 3 (strain ATCC 700970).